Reading from the N-terminus, the 426-residue chain is Pistil-specific extensin-like protein (426 aa).

The signal sequence occupies residues 1–23; that stretch reads MAVIISSKVLLIQLFVLVLGSFS. Disordered regions lie at residues 56–109 and 121–254; these read GPTF…GSKL and NLPD…AAEP. 4 stretches are compositionally biased toward pro residues: residues 60 to 94, 123 to 161, 168 to 224, and 231 to 254; these read VLPPPSPLPSPPPPSPSPPPPSPSPPPPSTIPLIP, PDVPPIGGGPPVNQPKPSSPSPLVKPPPPPPSPCKPSPP, PPQP…PPPP, and LLPPPPPVAYPPVMTPSPSPAAEP. Repeat copies occupy residues 69-73, 76-80, and 83-87. The 4 X 5 AA repeats of S-P(4) stretch occupies residues 69 to 182; sequence SPPPPSPSPP…PAKQPSPPPP (114 aa). Residues 178 to 182 form repeat 4; it reads SPPPP. Asn310 carries an N-linked (GlcNAc...) asparagine glycan.

As to expression, pistil (stigma and style tissue).

The protein is Pistil-specific extensin-like protein of Nicotiana tabacum (Common tobacco).